A 652-amino-acid polypeptide reads, in one-letter code: Probable endo-1,3(4)-beta-glucanase AFUB_029980 (652 aa).

The first 21 residues, 1 to 21 (MAPSSLLLSVGSLITSSLVSA), serve as a signal peptide directing secretion. Positions 36 to 289 (ESWQGESFIN…WAGNVFAEST (254 aa)) constitute a GH16 domain. Residue N64 is glycosylated (N-linked (GlcNAc...) asparagine). E145 acts as the Nucleophile in catalysis. E150 acts as the Proton donor in catalysis. 2 N-linked (GlcNAc...) asparagine glycosylation sites follow: N200 and N208. The segment at 379-423 (NTVATSAADHATPSSAETTTVPAATGAPSVSATEGGDSELESTST) is disordered. The segment covering 390-410 (TPSSAETTTVPAATGAPSVSA) has biased composition (polar residues). N453 carries an N-linked (GlcNAc...) asparagine glycan. Residues 509 to 551 (SEIPTAPPEPVSQAVSTGSFDDSDTAQGDSEEQGSIASASVAP) form a disordered region. Residues 529 to 540 (DDSDTAQGDSEE) are compositionally biased toward acidic residues. A lipid anchor (GPI-anchor amidated asparagine) is attached at N630. Residues 631 to 652 (GANRMSVGLSGLIGVMFIAALA) constitute a propeptide, removed in mature form.

It belongs to the glycosyl hydrolase 16 family.

The protein resides in the cell membrane. It carries out the reaction Endohydrolysis of (1-&gt;3)- or (1-&gt;4)-linkages in beta-D-glucans when the glucose residue whose reducing group is involved in the linkage to be hydrolyzed is itself substituted at C-3.. Mixed-linked glucanase involved in the degradation of complex natural cellulosic substrates. This Aspergillus fumigatus (strain CBS 144.89 / FGSC A1163 / CEA10) (Neosartorya fumigata) protein is Probable endo-1,3(4)-beta-glucanase AFUB_029980.